The primary structure comprises 550 residues: MELLLPHPSNSTPLTVLGFLDRAASVYGDCPSILHTTNTVHTWSETHNRCLRIASALTSSSLGINRGQVVSVVGPNVPSVYELQFAVPMSGAILNNINPRLDAHALSVLLRHSESKLVFVDPNSISVVLEAVSFMRQNEKPHLVLLDDDQEDGSLSPSAASDFLDTYQGVMERGDSRFKWIRPQTEWQPMILNYTSGTTSSPKGVVLSHRAIFMLTVSSLLDWHFPNRPVYLWTLPMFHANGWGYTWGTAAVGATNVCTRRVDAPTIYDLIDKHHVTHMCAAPMVLNMLTNYPSRKPLKNPVQVMTAGAPPPAAIISRAETLGFNVGHGYGLTETGGPVVSCAWKAEWDHLDPLERARLKSRQGVRTIGFAEVDVRDPRTGKSVEHDGVSVGEIVLKGGSVMLGYYKDPEGTAACMREDGWFYSGDVGVIHEDGYLEVKDRSKDVIICGGENISSAEVETVLYTNPVVKEAAVVAKPDKMWGETPCAFVSLKYDSNGNGLVTEREIREFCKTRLPKYMVPRKVIFQEELPKTSTGKIQKFLLRQMAKSLP.

Belongs to the ATP-dependent AMP-binding enzyme family. In terms of tissue distribution, expressed in leaves, flowers and developing seeds.

Functionally, may act as an acid--thiol ligase that activates carboxylic acids by forming acyl-CoAs. This Arabidopsis thaliana (Mouse-ear cress) protein is Probable acyl-activating enzyme 9 (AEE9).